The primary structure comprises 268 residues: uncharacterized protein (268 aa).

The N-terminal stretch at 1 to 18 (MRGFLLLSLGVFSFSALA) is a signal peptide. 2 domain regions span residues 24–184 (SHDL…ELLP) and 185–268 (SPAT…NWLR). The cysteines at positions 110 and 115 are disulfide-linked.

As to quaternary structure, monomer.

The protein localises to the periplasm. This is an uncharacterized protein from Pseudomonas aeruginosa (strain ATCC 15692 / DSM 22644 / CIP 104116 / JCM 14847 / LMG 12228 / 1C / PRS 101 / PAO1).